The chain runs to 158 residues: UPF0758 protein VC_1786 (158 aa).

The MPN domain occupies Thr-37–Leu-158. Residues His-108, His-110, and Asp-121 each contribute to the Zn(2+) site. Positions His-108–Asp-121 match the JAMM motif motif.

The protein belongs to the UPF0758 family.

This chain is UPF0758 protein VC_1786, found in Vibrio cholerae serotype O1 (strain ATCC 39315 / El Tor Inaba N16961).